The following is a 268-amino-acid chain: Glucosamine-6-phosphate deaminase (268 aa).

Asp-67 serves as the catalytic Proton acceptor; for enolization step. Asn-136 functions as the For ring-opening step in the catalytic mechanism. His-138 serves as the catalytic Proton acceptor; for ring-opening step. Catalysis depends on Glu-143, which acts as the For ring-opening step.

This sequence belongs to the glucosamine/galactosamine-6-phosphate isomerase family. NagB subfamily. Homohexamer.

It catalyses the reaction alpha-D-glucosamine 6-phosphate + H2O = beta-D-fructose 6-phosphate + NH4(+). The protein operates within amino-sugar metabolism; N-acetylneuraminate degradation; D-fructose 6-phosphate from N-acetylneuraminate: step 5/5. Functionally, catalyzes the reversible isomerization-deamination of glucosamine 6-phosphate (GlcN6P) to form fructose 6-phosphate (Fru6P) and ammonium ion. In Shewanella loihica (strain ATCC BAA-1088 / PV-4), this protein is Glucosamine-6-phosphate deaminase.